The chain runs to 226 residues: Beta-casein (226 aa).

The first 15 residues, 1–15, serve as a signal peptide directing secretion; that stretch reads MKVLILACLVALALA. Phosphothreonine; in form 5-P is present on Thr18. Phosphoserine; in form 4-P and form 5-P is present on Ser21. Ser23 bears the Phosphoserine; in form 3-P, form 4-P and form 5-P mark. Phosphoserine; in form 1-P, form 2-P, form 3-P, form 4-P and form 5-P occurs at positions 24 and 25.

This sequence belongs to the beta-casein family. Post-translationally, form 1-P is phosphorylated once; half of the molecules are phosphorylated on Ser-24, half on Ser-25. Mammary gland specific. Secreted in milk.

It localises to the secreted. Important role in determination of the surface properties of the casein micelles. This is Beta-casein (CSN2) from Homo sapiens (Human).